Consider the following 444-residue polypeptide: Tubulin beta-7 chain (444 aa).

GTP is bound by residues Gln11, Glu69, Ser138, Gly142, Thr143, Gly144, Asn204, and Asn226. Glu69 serves as a coordination point for Mg(2+).

Belongs to the tubulin family. Dimer of alpha and beta chains. A typical microtubule is a hollow water-filled tube with an outer diameter of 25 nm and an inner diameter of 15 nM. Alpha-beta heterodimers associate head-to-tail to form protofilaments running lengthwise along the microtubule wall with the beta-tubulin subunit facing the microtubule plus end conferring a structural polarity. Microtubules usually have 13 protofilaments but different protofilament numbers can be found in some organisms and specialized cells. It depends on Mg(2+) as a cofactor.

Its subcellular location is the cytoplasm. The protein resides in the cytoskeleton. Functionally, tubulin is the major constituent of microtubules, a cylinder consisting of laterally associated linear protofilaments composed of alpha- and beta-tubulin heterodimers. Microtubules grow by the addition of GTP-tubulin dimers to the microtubule end, where a stabilizing cap forms. Below the cap, tubulin dimers are in GDP-bound state, owing to GTPase activity of alpha-tubulin. In Gossypium hirsutum (Upland cotton), this protein is Tubulin beta-7 chain.